The following is a 226-amino-acid chain: Isoprenyl transferase (226 aa).

Aspartate 12 is an active-site residue. Position 12 (aspartate 12) interacts with Mg(2+). Residues 13 to 16, tryptophan 17, lysine 25, histidine 29, and 57 to 59 each bind substrate; these read GNAR and SFE. Residue asparagine 60 is the Proton acceptor of the active site. Residues tryptophan 61, arginine 63, arginine 174, and 180–182 each bind substrate; that span reads RIS. Glutamate 193 lines the Mg(2+) pocket.

Belongs to the UPP synthase family. In terms of assembly, homodimer. Requires Mg(2+) as cofactor.

In terms of biological role, catalyzes the condensation of isopentenyl diphosphate (IPP) with allylic pyrophosphates generating different type of terpenoids. The polypeptide is Isoprenyl transferase (Rickettsia prowazekii (strain Madrid E)).